A 404-amino-acid chain; its full sequence is Pyruvate-flavodoxin oxidoreductase (404 aa).

The protein belongs to the pyruvate:ferredoxin/flavodoxin oxidoreductase family.

The catalysed reaction is oxidized [flavodoxin] + pyruvate + CoA + 2 H(+) = reduced [flavodoxin] + acetyl-CoA + CO2. Oxidoreductase required for the transfer of electrons from pyruvate to flavodoxin, which reduces nitrogenase. The protein is Pyruvate-flavodoxin oxidoreductase (nifJ) of Nostoc sp. (strain ATCC 29151 / PCC 7119) (Anabaena sp.).